A 240-amino-acid chain; its full sequence is Ubiquinone biosynthesis O-methyltransferase (240 aa).

S-adenosyl-L-methionine contacts are provided by Arg44, Gly64, Asp85, and Met129.

Belongs to the methyltransferase superfamily. UbiG/COQ3 family.

The enzyme catalyses a 3-demethylubiquinol + S-adenosyl-L-methionine = a ubiquinol + S-adenosyl-L-homocysteine + H(+). The catalysed reaction is a 3-(all-trans-polyprenyl)benzene-1,2-diol + S-adenosyl-L-methionine = a 2-methoxy-6-(all-trans-polyprenyl)phenol + S-adenosyl-L-homocysteine + H(+). Its pathway is cofactor biosynthesis; ubiquinone biosynthesis. O-methyltransferase that catalyzes the 2 O-methylation steps in the ubiquinone biosynthetic pathway. The protein is Ubiquinone biosynthesis O-methyltransferase of Escherichia coli O157:H7.